The following is a 198-amino-acid chain: Peroxiredoxin-2 (198 aa).

Residue Ala-2 is modified to N-acetylalanine. The region spanning 6 to 164 (AHIGKPAPDF…ALRLVQAFQY (159 aa)) is the Thioredoxin domain. Catalysis depends on Cys-51, which acts as the Cysteine sulfenic acid (-SOH) intermediate. Phosphoserine is present on Ser-112. Thr-182 is modified (phosphothreonine). Lys-196 bears the N6-acetyllysine mark.

This sequence belongs to the peroxiredoxin family. AhpC/Prx1 subfamily. As to quaternary structure, homodimer; disulfide-linked, upon oxidation. 5 homodimers assemble to form a ring-like decamer. Interacts with TIPIN. Post-translationally, the enzyme can be inactivated by further oxidation of the cysteine sulfenic acid (C(P)-SOH) to sulphinic acid (C(P)-SO2H) instead of its condensation to a disulfide bond. It can be reactivated by forming a transient disulfide bond with sulfiredoxin SRXN1, which reduces the cysteine sulfinic acid in an ATP- and Mg-dependent manner. Acetylation increases resistance to transition to high molecular-mass complexes. Deacetylated by HDAC6 which decreases reducing activity.

The protein localises to the cytoplasm. It carries out the reaction a hydroperoxide + [thioredoxin]-dithiol = an alcohol + [thioredoxin]-disulfide + H2O. Functionally, thiol-specific peroxidase that catalyzes the reduction of hydrogen peroxide and organic hydroperoxides to water and alcohols, respectively. Plays a role in cell protection against oxidative stress by detoxifying peroxides and as sensor of hydrogen peroxide-mediated signaling events. Might participate in the signaling cascades of growth factors and tumor necrosis factor-alpha by regulating the intracellular concentrations of H(2)O(2). The protein is Peroxiredoxin-2 (PRDX2) of Cricetulus griseus (Chinese hamster).